The following is an 827-amino-acid chain: MARWSGQIMCFRVGHFLLVGHFLLVGNFLLTDDSDTFSFVALGGGREVGRSCHVISFKGKTIMLDAGVHPAHSGLASLPFYDEFDLSTIDILLISHFHLDHAASLPYVMQKTNFKGRVFMTHPTKGIYRWLLSDFVRVTSGAESDPDLYSEADLTASFNKIETIDYHSTMEVNGVKFTAYHAGHVLGAAMYTIEVGGVKVLFTGDYSREEDRHLNQAEVPPMKPDILICESTYGTGTHLPRLEREQRLTGLIHSTLDKGGKCLLPVFALGRAQEILLILDEYWEAHPDLQEFSIYYASALAKKCIAVYQTYINMMNDNIRRRFRDQKTNPFRFKYIKNIKNLDRFDDMGPCVMVASPGMLQSGVSRSLLERWAPDPKNTLILTGYSVEGTMAKQIINEPNEIPSAQNPDLKVPRRLAVEELSFAAHVDFQQNSEFIDLVDSKNIILVHGELNNMQRLKAALLAKYRGLKNSPREKTIYNPRNCEEVELAFKGVKVAKTVGKMAEEKPHVGQIISGVVVQKDFNYGLMGVADLREHVGLSTSSVLERQTVTVNAGVDLVKYHLEQMFGYVEMRETENVKIEEMEDDVAEEEEDKEVKQEVEDVTMEGEVKDETAEEVKKEEEVAEEFKQEVEGDSDTSAGTTFVVMNSVTVKHTPTSCTIEWVGSCLNDSIADAVLAILLTVDNSRASVKMSSKQCAHSHGHEDGHSNSSLDERVLQLSSILKAQFGDSYIVSEDGKSANIKIDAMEATISFSDLSVTGSPPPLVQRVQVAVDRAISLVAPLAQKLSAVDLVEGFKAIENVKDREENGEVKAEDEEKVKAEEKVKEEE.

Zn(2+) is bound by residues H96, H98, D100, H101, H184, and D205. The active-site Proton donor is H426. H448 is a binding site for Zn(2+). Residues 583–592 are compositionally biased toward acidic residues; sequence EDDVAEEEED. 2 disordered regions span residues 583–621 and 802–827; these read EDDV…KEEE and DREE…KEEE. Residues 606 to 621 show a composition bias toward basic and acidic residues; the sequence is GEVKDETAEEVKKEEE.

Belongs to the metallo-beta-lactamase superfamily. RNA-metabolizing metallo-beta-lactamase-like family. CPSF2/YSH1 subfamily.

It is found in the nucleus. In terms of biological role, component of the cleavage factor I (CF I) involved in pre-mRNA 3'-end processing. In Yarrowia lipolytica (strain CLIB 122 / E 150) (Yeast), this protein is Endoribonuclease YSH1 (YSH1).